The primary structure comprises 530 residues: Type 2 DNA topoisomerase 6 subunit B (530 aa).

Residues asparagine 42, aspartate 76, 97-98 (SK), 106-113 (GMYGLGVK), and lysine 427 contribute to the ATP site.

It belongs to the TOP6B family. Homodimer. Heterotetramer of two Top6A and two Top6B chains.

It carries out the reaction ATP-dependent breakage, passage and rejoining of double-stranded DNA.. In terms of biological role, relaxes both positive and negative superturns and exhibits a strong decatenase activity. The sequence is that of Type 2 DNA topoisomerase 6 subunit B from Saccharolobus solfataricus (strain ATCC 35092 / DSM 1617 / JCM 11322 / P2) (Sulfolobus solfataricus).